A 125-amino-acid polypeptide reads, in one-letter code: MORF4 family-associated protein 1 (125 aa).

Residues 76–99 (ESALNHLQGAGGAEPRGPRAEKAD) form a disordered region. Positions 94–124 (RAEKADEKAQEMAKMAEMLVQLVRRIEKSES) form a coiled coil.

Belongs to the MORF4 family-associated protein family. Found in a complex composed of MORF4L1, MRFAP1 and RB1. Interacts via its N-terminus with MORF4L1. Interacts with CSTB and MORF4L2.

The protein resides in the nucleus. It is found in the cytoplasm. The protein localises to the perinuclear region. The polypeptide is MORF4 family-associated protein 1 (Rattus norvegicus (Rat)).